We begin with the raw amino-acid sequence, 450 residues long: MMDKRTSEIEFHLKNLLACDAYKLSHRLMYPQDTQNLYSMLTARGVYGDFKEFVWNHDFAKEILLNVFNGFVNSVIEVKKNKLLAAALTDKLVSVFNDHELANEFTQHICHLASFLEKNKKMPLVAKIHESDQSLPFRTPLITIEGVENIPNNFVWLVNYFETVLLENIWLFQTASTVAKRIKSLLEKYAKETADETSFINFQCHDFSMRGMSSLQSALYVARAHLQYFTGSDTILGGDNSRSILASEHSVMCADGSKHELKTFQRLLEKFKDKKLSLVIDSYDMWNVLDNIIPRLKNLILMRGATLYLRADSGNYQTLICNPNYKKQDKSTWAMIDYLDHHFSSTINKKGYKVLNKKIGIIYGDGITYQKIEWILNCLKNHGYCSSNIIFGVGSSTYQNLNRDTLGFVYKLTAIKRNNRWIGVKKTPITDLSKSSKGGRYKTKRLITVY.

A diphosphate-binding site is contributed by Arg-210. Asp-233 lines the beta-nicotinamide D-ribonucleotide pocket. His-249 and Arg-310 together coordinate diphosphate. Beta-nicotinamide D-ribonucleotide is bound by residues 310–312 (RAD), 364–365 (GD), and Arg-403.

It belongs to the NAPRTase family.

It carries out the reaction beta-nicotinamide D-ribonucleotide + diphosphate = 5-phospho-alpha-D-ribose 1-diphosphate + nicotinamide + H(+). It participates in cofactor biosynthesis; NAD(+) biosynthesis; nicotinamide D-ribonucleotide from 5-phospho-alpha-D-ribose 1-diphosphate and nicotinamide: step 1/1. Its function is as follows. Catalyzes the condensation of nicotinamide with 5-phosphoribosyl-1-pyrophosphate to yield nicotinamide mononucleotide, an intermediate in the biosynthesis of NAD. The sequence is that of Nicotinamide phosphoribosyltransferase from Mycoplasma genitalium (strain ATCC 33530 / DSM 19775 / NCTC 10195 / G37) (Mycoplasmoides genitalium).